Consider the following 185-residue polypeptide: Ribosome-recycling factor (185 aa).

It belongs to the RRF family.

It is found in the cytoplasm. In terms of biological role, responsible for the release of ribosomes from messenger RNA at the termination of protein biosynthesis. May increase the efficiency of translation by recycling ribosomes from one round of translation to another. The polypeptide is Ribosome-recycling factor (Hamiltonella defensa subsp. Acyrthosiphon pisum (strain 5AT)).